Consider the following 136-residue polypeptide: Type II nicking enzyme V.XorIIP (136 aa).

It belongs to the Vsr family.

Its function is as follows. May nick XorII sequences that contain T/G mispairs resulting from m5C-deamination. If unrepaired, these mismatches can lead to C-to-T transition mutations. The very short patch (VSP) repair process counteracts the mutagenic process by repairing the mismatches in favor of the G-containing strand. This enzyme is an endonuclease that nicks double-stranded DNA within the sequence CGATCG (C-methylation site unknown) next to the thymidine residue that is mismatched to 2'-deoxyguanosine. The incision is mismatch-dependent and strand-specific. The polypeptide is Type II nicking enzyme V.XorIIP (Xanthomonas oryzae pv. oryzae (strain KACC10331 / KXO85)).